The primary structure comprises 122 residues: Small ribosomal subunit protein uS13 (122 aa).

The disordered stretch occupies residues 95–122 (GLPVRGQRTHTNARTRKGPAKSIAGKKK).

It belongs to the universal ribosomal protein uS13 family. As to quaternary structure, part of the 30S ribosomal subunit. Forms a loose heterodimer with protein S19. Forms two bridges to the 50S subunit in the 70S ribosome.

Its function is as follows. Located at the top of the head of the 30S subunit, it contacts several helices of the 16S rRNA. In the 70S ribosome it contacts the 23S rRNA (bridge B1a) and protein L5 of the 50S subunit (bridge B1b), connecting the 2 subunits; these bridges are implicated in subunit movement. Contacts the tRNAs in the A and P-sites. This chain is Small ribosomal subunit protein uS13, found in Nitrobacter winogradskyi (strain ATCC 25391 / DSM 10237 / CIP 104748 / NCIMB 11846 / Nb-255).